Reading from the N-terminus, the 815-residue chain is ABC transporter G family member 7 (815 aa).

2 disordered regions span residues 81–141 (NNID…TPNF) and 177–249 (KQIK…TNGK). A coiled-coil region spans residues 164–199 (ENISYKTENRNYKKQIKDEKKRKKKLEMERSNSSNS). Low complexity predominate over residues 194 to 210 (SNSSNSNSSYDVESSAS). Residues 211-248 (GLQTPQQSRSSILPTNSLNISKIDQSMNPQQTRSTTNG) are compositionally biased toward polar residues. The 244-residue stretch at 242–485 (TRSTTNGKIE…SLPNQYQCPN (244 aa)) folds into the ABC transporter domain. 274–281 (GPSGSGKS) is an ATP binding site. The 249-residue stretch at 562 to 810 (TQYITRLSGG…VSGYWAISKL (249 aa)) folds into the ABC transmembrane type-2 domain. Helical transmembrane passes span 568–588 (LSGGFMIGLLFSACFGTLSPS), 598–618 (ILFFLIAVLNLIPFTCITLFL), 647–667 (AFIQFLVSLIVSLLVYTINHL), 675–695 (FITYFILYLINLLSDLYIIAI), 706–726 (FIYGTTISITFLLFMGHLVPV), 732–752 (SFGWIHWLNPLYYGYATVMVA), and 788–808 (GIGIIILWICFFFVSGYWAIS).

Belongs to the ABC transporter superfamily. ABCG family.

The protein localises to the membrane. This Dictyostelium discoideum (Social amoeba) protein is ABC transporter G family member 7 (abcG7).